Reading from the N-terminus, the 1099-residue chain is Carbamoyl phosphate synthase large chain (1099 aa).

The tract at residues 1–402 (MPRREDIKRI…ALGKALRSLE (402 aa)) is carboxyphosphate synthetic domain. The ATP site is built by arginine 129, arginine 169, glycine 175, glycine 176, glutamate 208, valine 210, glutamate 215, glycine 241, isoleucine 242, histidine 243, glutamine 285, and glutamate 299. The 196-residue stretch at 133-328 (KKTMEEAGLE…IAKIAALLAV (196 aa)) folds into the ATP-grasp 1 domain. 3 residues coordinate Mg(2+): glutamine 285, glutamate 299, and asparagine 301. Glutamine 285, glutamate 299, and asparagine 301 together coordinate Mn(2+). Positions 403–541 (LDAAPKLDLD…STYNGVENEA (139 aa)) are oligomerization domain. The segment at 542–944 (IPTDKEKIMI…AFAKAEIAAG (403 aa)) is carbamoyl phosphate synthetic domain. The ATP-grasp 2 domain occupies 666 to 857 (AKLLKRIGLR…VAKIAAKIMV (192 aa)). ATP-binding residues include arginine 702, lysine 741, leucine 743, glutamate 748, glycine 773, valine 774, histidine 775, serine 776, glutamine 816, and glutamate 828. The Mg(2+) site is built by glutamine 816, glutamate 828, and asparagine 830. Residues glutamine 816, glutamate 828, and asparagine 830 each coordinate Mn(2+). Residues 945–1099 (NPLPTEGAIL…VRKLTDTWKM (155 aa)) form the MGS-like domain. Residues 945–1099 (NPLPTEGAIL…VRKLTDTWKM (155 aa)) are allosteric domain.

Belongs to the CarB family. In terms of assembly, composed of two chains; the small (or glutamine) chain promotes the hydrolysis of glutamine to ammonia, which is used by the large (or ammonia) chain to synthesize carbamoyl phosphate. Tetramer of heterodimers (alpha,beta)4. It depends on Mg(2+) as a cofactor. Mn(2+) serves as cofactor.

It carries out the reaction hydrogencarbonate + L-glutamine + 2 ATP + H2O = carbamoyl phosphate + L-glutamate + 2 ADP + phosphate + 2 H(+). The enzyme catalyses hydrogencarbonate + NH4(+) + 2 ATP = carbamoyl phosphate + 2 ADP + phosphate + 2 H(+). It participates in amino-acid biosynthesis; L-arginine biosynthesis; carbamoyl phosphate from bicarbonate: step 1/1. It functions in the pathway pyrimidine metabolism; UMP biosynthesis via de novo pathway; (S)-dihydroorotate from bicarbonate: step 1/3. Functionally, large subunit of the glutamine-dependent carbamoyl phosphate synthetase (CPSase). CPSase catalyzes the formation of carbamoyl phosphate from the ammonia moiety of glutamine, carbonate, and phosphate donated by ATP, constituting the first step of 2 biosynthetic pathways, one leading to arginine and/or urea and the other to pyrimidine nucleotides. The large subunit (synthetase) binds the substrates ammonia (free or transferred from glutamine from the small subunit), hydrogencarbonate and ATP and carries out an ATP-coupled ligase reaction, activating hydrogencarbonate by forming carboxy phosphate which reacts with ammonia to form carbamoyl phosphate. This chain is Carbamoyl phosphate synthase large chain, found in Thermotoga neapolitana (strain ATCC 49049 / DSM 4359 / NBRC 107923 / NS-E).